A 208-amino-acid chain; its full sequence is FMN-dependent NADH:quinone oxidoreductase 2 (208 aa).

Belongs to the azoreductase type 1 family. In terms of assembly, homodimer. It depends on FMN as a cofactor.

It catalyses the reaction 2 a quinone + NADH + H(+) = 2 a 1,4-benzosemiquinone + NAD(+). It carries out the reaction N,N-dimethyl-1,4-phenylenediamine + anthranilate + 2 NAD(+) = 2-(4-dimethylaminophenyl)diazenylbenzoate + 2 NADH + 2 H(+). In terms of biological role, quinone reductase that provides resistance to thiol-specific stress caused by electrophilic quinones. Its function is as follows. Also exhibits azoreductase activity. Catalyzes the reductive cleavage of the azo bond in aromatic azo compounds to the corresponding amines. This Bacillus anthracis protein is FMN-dependent NADH:quinone oxidoreductase 2.